The chain runs to 81 residues: Sec-independent protein translocase protein TatA (81 aa).

The helical transmembrane segment at 1 to 21 (MGGLQPWHWVIVIAVFVLLFG) threads the bilayer. The span at 46–56 (MQAESKGDEPK) shows a compositional bias: basic and acidic residues. A disordered region spans residues 46–81 (MQAESKGDEPKPATPIASERVDTTAPEQQSTDRHTA).

Belongs to the TatA/E family. The Tat system comprises two distinct complexes: a TatABC complex, containing multiple copies of TatA, TatB and TatC subunits, and a separate TatA complex, containing only TatA subunits. Substrates initially bind to the TatABC complex, which probably triggers association of the separate TatA complex to form the active translocon.

Its subcellular location is the cell membrane. Functionally, part of the twin-arginine translocation (Tat) system that transports large folded proteins containing a characteristic twin-arginine motif in their signal peptide across membranes. TatA could form the protein-conducting channel of the Tat system. In Mycolicibacterium smegmatis (strain ATCC 700084 / mc(2)155) (Mycobacterium smegmatis), this protein is Sec-independent protein translocase protein TatA.